We begin with the raw amino-acid sequence, 214 residues long: Large ribosomal subunit protein uL16 (214 aa).

Belongs to the universal ribosomal protein uL16 family. In terms of assembly, component of the large ribosomal subunit. Mature ribosomes consist of a small (40S) and a large (60S) subunit. The 40S subunit contains about 33 different proteins and 1 molecule of RNA (18S). The 60S subunit contains about 49 different proteins and 3 molecules of RNA (28S, 5.8S and 5S).

The protein is Large ribosomal subunit protein uL16 (rpl-10L) of Caenorhabditis elegans.